We begin with the raw amino-acid sequence, 488 residues long: NADH-quinone oxidoreductase subunit N (488 aa).

14 helical membrane-spanning segments follow: residues 15-35, 42-62, 79-99, 108-128, 133-153, 168-188, 209-229, 243-263, 277-297, 305-325, 333-353, 376-396, 409-429, and 456-476; these read LALPEIWMLVMACVVLVVDLY, GMTFMLTQFTLVVAGVLAIVA, NLAAVLKVAIAGLGFLSFAYC, LLKGEYFVLGLFSLLGMMIMA, LMTVYLGLELLALTLYAMVAF, FVLGAIASGILLYGMSLIYGA, WLLLLGMTLVVVGVAFKFGAV, PTTVALFASTAPKVAAVALFV, WQPMIILLAVASLVVGNLAAL, MLAYSTASHVGFILLGFIAGT, LFYAITYGIMSAGAFGLIILL, MALMMLLLMFSMTGIPGTVGF, VGLVWLAVFAVVFAVIGAFYY, and GLLVANGIAVLLLGIFPDSLI.

It belongs to the complex I subunit 2 family. NDH-1 is composed of 14 different subunits. Subunits NuoA, H, J, K, L, M, N constitute the membrane sector of the complex.

Its subcellular location is the cell inner membrane. The enzyme catalyses a quinone + NADH + 5 H(+)(in) = a quinol + NAD(+) + 4 H(+)(out). In terms of biological role, NDH-1 shuttles electrons from NADH, via FMN and iron-sulfur (Fe-S) centers, to quinones in the respiratory chain. The immediate electron acceptor for the enzyme in this species is believed to be ubiquinone. Couples the redox reaction to proton translocation (for every two electrons transferred, four hydrogen ions are translocated across the cytoplasmic membrane), and thus conserves the redox energy in a proton gradient. This is NADH-quinone oxidoreductase subunit N from Alkalilimnicola ehrlichii (strain ATCC BAA-1101 / DSM 17681 / MLHE-1).